The primary structure comprises 336 residues: Holliday junction branch migration complex subunit RuvB (336 aa).

Residues Met-1–Tyr-181 form a large ATPase domain (RuvB-L) region. ATP is bound by residues Leu-20, Arg-21, Gly-62, Lys-65, Thr-66, Thr-67, Glu-128–Phe-130, Arg-171, Tyr-181, and Arg-218. Thr-66 is a Mg(2+) binding site. The segment at Lys-182–Gly-252 is small ATPAse domain (RuvB-S). The tract at residues Glu-255 to Lys-336 is head domain (RuvB-H). DNA-binding residues include Arg-309 and Arg-314.

This sequence belongs to the RuvB family. Homohexamer. Forms an RuvA(8)-RuvB(12)-Holliday junction (HJ) complex. HJ DNA is sandwiched between 2 RuvA tetramers; dsDNA enters through RuvA and exits via RuvB. An RuvB hexamer assembles on each DNA strand where it exits the tetramer. Each RuvB hexamer is contacted by two RuvA subunits (via domain III) on 2 adjacent RuvB subunits; this complex drives branch migration. In the full resolvosome a probable DNA-RuvA(4)-RuvB(12)-RuvC(2) complex forms which resolves the HJ.

It is found in the cytoplasm. The catalysed reaction is ATP + H2O = ADP + phosphate + H(+). Its function is as follows. The RuvA-RuvB-RuvC complex processes Holliday junction (HJ) DNA during genetic recombination and DNA repair, while the RuvA-RuvB complex plays an important role in the rescue of blocked DNA replication forks via replication fork reversal (RFR). RuvA specifically binds to HJ cruciform DNA, conferring on it an open structure. The RuvB hexamer acts as an ATP-dependent pump, pulling dsDNA into and through the RuvAB complex. RuvB forms 2 homohexamers on either side of HJ DNA bound by 1 or 2 RuvA tetramers; 4 subunits per hexamer contact DNA at a time. Coordinated motions by a converter formed by DNA-disengaged RuvB subunits stimulates ATP hydrolysis and nucleotide exchange. Immobilization of the converter enables RuvB to convert the ATP-contained energy into a lever motion, pulling 2 nucleotides of DNA out of the RuvA tetramer per ATP hydrolyzed, thus driving DNA branch migration. The RuvB motors rotate together with the DNA substrate, which together with the progressing nucleotide cycle form the mechanistic basis for DNA recombination by continuous HJ branch migration. Branch migration allows RuvC to scan DNA until it finds its consensus sequence, where it cleaves and resolves cruciform DNA. The chain is Holliday junction branch migration complex subunit RuvB from Campylobacter lari (strain RM2100 / D67 / ATCC BAA-1060).